Consider the following 506-residue polypeptide: 2,3-bisphosphoglycerate-independent phosphoglycerate mutase (506 aa).

The Mn(2+) site is built by D13 and S63. Catalysis depends on S63, which acts as the Phosphoserine intermediate. Substrate contacts are provided by residues H124, 153-154, R183, R189, 254-257, and K330; these read RD and RADR. The Mn(2+) site is built by D396, H400, D437, H438, and H456.

The protein belongs to the BPG-independent phosphoglycerate mutase family. In terms of assembly, monomer. Mn(2+) serves as cofactor.

It carries out the reaction (2R)-2-phosphoglycerate = (2R)-3-phosphoglycerate. The protein operates within carbohydrate degradation; glycolysis; pyruvate from D-glyceraldehyde 3-phosphate: step 3/5. Functionally, catalyzes the interconversion of 2-phosphoglycerate and 3-phosphoglycerate. This chain is 2,3-bisphosphoglycerate-independent phosphoglycerate mutase, found in Cereibacter sphaeroides (strain KD131 / KCTC 12085) (Rhodobacter sphaeroides).